A 203-amino-acid polypeptide reads, in one-letter code: 3-isopropylmalate dehydratase small subunit (203 aa).

It belongs to the LeuD family. LeuD type 1 subfamily. As to quaternary structure, heterodimer of LeuC and LeuD.

It catalyses the reaction (2R,3S)-3-isopropylmalate = (2S)-2-isopropylmalate. The protein operates within amino-acid biosynthesis; L-leucine biosynthesis; L-leucine from 3-methyl-2-oxobutanoate: step 2/4. In terms of biological role, catalyzes the isomerization between 2-isopropylmalate and 3-isopropylmalate, via the formation of 2-isopropylmaleate. The chain is 3-isopropylmalate dehydratase small subunit from Pelagibacter ubique (strain HTCC1062).